An 84-amino-acid polypeptide reads, in one-letter code: Esculentin-1ISb (84 aa).

The first 22 residues, 1–22, serve as a signal peptide directing secretion; it reads MFTLKKPLLLIVLLGIISLSLC. Positions 23-36 are cleaved as a propeptide — removed in mature form; that stretch reads EQERAADEDEGTKI. Cys78 and Cys84 are disulfide-bonded.

In terms of tissue distribution, expressed by the skin glands.

It is found in the secreted. Its function is as follows. Has antimicrobial activity against Gram-negative bacterium E.coli ATCC 8739 (MIC=3.1 ug), against Gram positive bacteria S.aureus ATCC 6538 (MIC=3.1 ug), methicillin-resistant S.aureus ATCC 43300 (MIC=12.5 ug), B.subtilis ATCC 6633 (MIC=12.5 ug) and against fungus C.albicans ATCC 90028 (MIC=50 ug). The chain is Esculentin-1ISb from Odorrana ishikawae (Ishikawa's frog).